The sequence spans 370 residues: Cytochrome b (370 aa).

A run of 4 helical transmembrane segments spans residues 25-45, 69-90, 105-125, and 170-190; these read FGSM…FLAV, WLMQ…YIHI, WLSG…GYVL, and FFAL…LHVI. 2 residues coordinate heme b: H75 and H89. Heme b is bound by residues H174 and H188. H193 is an a ubiquinone binding site. 4 helical membrane-spanning segments follow: residues 218-238, 280-300, 312-332, and 339-358; these read YKDL…VSFS, LGGA…PFTH, FMQM…WTAT, and FTLI…ISNP.

It belongs to the cytochrome b family. The cytochrome bc1 complex contains 3 respiratory subunits (MT-CYB, CYC1 and UQCRFS1), 2 core proteins (UQCRC1 and UQCRC2) and probably 6 low-molecular weight proteins. The cofactor is heme b.

Its subcellular location is the mitochondrion inner membrane. In terms of biological role, component of the ubiquinol-cytochrome c reductase complex (complex III or cytochrome b-c1 complex) that is part of the mitochondrial respiratory chain. The b-c1 complex mediates electron transfer from ubiquinol to cytochrome c. Contributes to the generation of a proton gradient across the mitochondrial membrane that is then used for ATP synthesis. The protein is Cytochrome b (MT-CYB) of Eunectes murinus (Green anaconda).